The chain runs to 27 residues: SIFVLPDLPYAKDALPKISAKTFDFGK.

It belongs to the iron/manganese superoxide dismutase family. In terms of assembly, homodimer. Mn(2+) serves as cofactor.

The enzyme catalyses 2 superoxide + 2 H(+) = H2O2 + O2. Functionally, destroys superoxide anion radicals which are normally produced within the cells and which are toxic to biological systems. In Desulfovibrio desulfuricans, this protein is Superoxide dismutase [Mn] (sodA).